We begin with the raw amino-acid sequence, 256 residues long: Type III pantothenate kinase (256 aa).

6–13 (DVGNSNIV) is an ATP binding site. Residues tyrosine 100 and 107–110 (GADR) contribute to the substrate site. The Proton acceptor role is filled by aspartate 109. A K(+)-binding site is contributed by aspartate 129. Threonine 132 contacts ATP. Threonine 184 serves as a coordination point for substrate.

Belongs to the type III pantothenate kinase family. In terms of assembly, homodimer. The cofactor is NH4(+). K(+) is required as a cofactor.

The protein resides in the cytoplasm. The catalysed reaction is (R)-pantothenate + ATP = (R)-4'-phosphopantothenate + ADP + H(+). Its pathway is cofactor biosynthesis; coenzyme A biosynthesis; CoA from (R)-pantothenate: step 1/5. In terms of biological role, catalyzes the phosphorylation of pantothenate (Pan), the first step in CoA biosynthesis. The sequence is that of Type III pantothenate kinase from Geotalea daltonii (strain DSM 22248 / JCM 15807 / FRC-32) (Geobacter daltonii).